Reading from the N-terminus, the 195-residue chain is Oocyte-secreted protein 3 (195 aa).

The N-terminal stretch at 1-21 (MKAFVASGLLLLIFGMWRCSG) is a signal peptide. An N-linked (GlcNAc...) asparagine glycan is attached at Asn102.

Belongs to the PLAC1 family. As to expression, oocyte-specific.

The protein localises to the secreted. The polypeptide is Oocyte-secreted protein 3 (Mus musculus (Mouse)).